The chain runs to 525 residues: GMP synthase [glutamine-hydrolyzing] (525 aa).

The region spanning 8–207 (KILILDFGSQ…ALDICGCAAN (200 aa)) is the Glutamine amidotransferase type-1 domain. Cys-85 (nucleophile) is an active-site residue. Catalysis depends on residues His-181 and Glu-183. A GMPS ATP-PPase domain is found at 208–400 (WKPSSIIEDA…LGLPYNMLYR (193 aa)). 235-241 (SGGVDSS) is a binding site for ATP.

As to quaternary structure, homodimer.

The enzyme catalyses XMP + L-glutamine + ATP + H2O = GMP + L-glutamate + AMP + diphosphate + 2 H(+). Its pathway is purine metabolism; GMP biosynthesis; GMP from XMP (L-Gln route): step 1/1. Catalyzes the synthesis of GMP from XMP. In Shewanella putrefaciens (strain CN-32 / ATCC BAA-453), this protein is GMP synthase [glutamine-hydrolyzing].